Reading from the N-terminus, the 168-residue chain is Large ribosomal subunit protein bL9 (168 aa).

A disordered region spans residues 149 to 168; it reads QSFEEEPAPEAPAEEAEAAE. Over residues 152 to 168 the composition is skewed to acidic residues; that stretch reads EEEPAPEAPAEEAEAAE.

Belongs to the bacterial ribosomal protein bL9 family.

Functionally, binds to the 23S rRNA. This is Large ribosomal subunit protein bL9 from Desulfovibrio desulfuricans (strain ATCC 27774 / DSM 6949 / MB).